The sequence spans 1222 residues: PAN2-PAN3 deadenylation complex catalytic subunit PAN2 (1222 aa).

WD repeat units lie at residues 104 to 143 (PEMTELRCMSFTAQPHKIIVAGLQSAMFIIDVEKGAIVDQ) and 276 to 315 (ANVAFMLGLEVSPSGEALAINDAECSIHLWGSPSKIHFNE). The tract at residues 316–451 (IGKETEFSDI…GLKINGETKE (136 aa)) is linker. Residues 452–821 (DPLLKYSNVE…SPCTLAYQIS (370 aa)) form the USP domain. Residues 871 to 1027 (ALDTEFVDLE…WAVFKEYIQE (157 aa)) enclose the Exonuclease domain. A divalent metal cation-binding residues include Asp-873, Glu-875, and Asp-982. The tract at residues 1035 to 1067 (TSITTTTNPNIHDANTSTTTTTAITTTPPEGHD) is disordered. The segment covering 1050–1061 (TSTTTTTAITTT) has biased composition (low complexity). Asp-1071 contributes to the a divalent metal cation binding site. 2 disordered regions span residues 1110-1152 (PARY…LSGR) and 1167-1222 (ASVT…SPMR). Over residues 1119 to 1133 (PNPNNNNINNGVNPN) the composition is skewed to low complexity. Positions 1134–1144 (GLSTPGSTNPI) are enriched in polar residues. Low complexity predominate over residues 1180–1191 (NGSMSGSTPSTP). Residues 1207 to 1216 (SFGGAKGLTF) show a composition bias toward gly residues.

Belongs to the peptidase C19 family. PAN2 subfamily. Forms a heterotrimer with an asymmetric homodimer of the regulatory subunit PAN3 to form the poly(A)-nuclease (PAN) deadenylation complex. The cofactor is a divalent metal cation.

It localises to the cytoplasm. It catalyses the reaction Exonucleolytic cleavage of poly(A) to 5'-AMP.. Positively regulated by the regulatory subunit PAN3. Its function is as follows. Catalytic subunit of the poly(A)-nuclease (PAN) deadenylation complex, one of two cytoplasmic mRNA deadenylases involved in mRNA turnover. PAN specifically shortens poly(A) tails of RNA and the activity is stimulated by poly(A)-binding protein PAB1. PAN deadenylation is followed by rapid degradation of the shortened mRNA tails by the CCR4-NOT complex. Deadenylated mRNAs are then degraded by two alternative mechanisms, namely exosome-mediated 3'-5' exonucleolytic degradation, or deadenylation-dependent mRNA decaping and subsequent 5'-3' exonucleolytic degradation by XRN1. May also be involved in post-transcriptional maturation of mRNA poly(A) tails. This is PAN2-PAN3 deadenylation complex catalytic subunit PAN2 from Coccidioides immitis (strain RS) (Valley fever fungus).